A 217-amino-acid chain; its full sequence is N-(5'-phosphoribosyl)anthranilate isomerase (217 aa).

The protein belongs to the TrpF family.

It catalyses the reaction N-(5-phospho-beta-D-ribosyl)anthranilate = 1-(2-carboxyphenylamino)-1-deoxy-D-ribulose 5-phosphate. Its pathway is amino-acid biosynthesis; L-tryptophan biosynthesis; L-tryptophan from chorismate: step 3/5. The chain is N-(5'-phosphoribosyl)anthranilate isomerase from Synechococcus sp. (strain ATCC 27144 / PCC 6301 / SAUG 1402/1) (Anacystis nidulans).